The primary structure comprises 164 residues: Crossover junction endodeoxyribonuclease RuvC (164 aa).

Active-site residues include Asp-7, Glu-67, and Asp-140. Mg(2+) is bound by residues Asp-7, Glu-67, and Asp-140.

Belongs to the RuvC family. Homodimer which binds Holliday junction (HJ) DNA. The HJ becomes 2-fold symmetrical on binding to RuvC with unstacked arms; it has a different conformation from HJ DNA in complex with RuvA. In the full resolvosome a probable DNA-RuvA(4)-RuvB(12)-RuvC(2) complex forms which resolves the HJ. Mg(2+) is required as a cofactor.

It localises to the cytoplasm. The enzyme catalyses Endonucleolytic cleavage at a junction such as a reciprocal single-stranded crossover between two homologous DNA duplexes (Holliday junction).. The RuvA-RuvB-RuvC complex processes Holliday junction (HJ) DNA during genetic recombination and DNA repair. Endonuclease that resolves HJ intermediates. Cleaves cruciform DNA by making single-stranded nicks across the HJ at symmetrical positions within the homologous arms, yielding a 5'-phosphate and a 3'-hydroxyl group; requires a central core of homology in the junction. The consensus cleavage sequence is 5'-(A/T)TT(C/G)-3'. Cleavage occurs on the 3'-side of the TT dinucleotide at the point of strand exchange. HJ branch migration catalyzed by RuvA-RuvB allows RuvC to scan DNA until it finds its consensus sequence, where it cleaves and resolves the cruciform DNA. The chain is Crossover junction endodeoxyribonuclease RuvC from Pelotomaculum thermopropionicum (strain DSM 13744 / JCM 10971 / SI).